The sequence spans 445 residues: Xylose isomerase (445 aa).

Active-site residues include H99 and D102. The Mg(2+) site is built by E230, E266, H269, D294, D305, D307, and D337.

It belongs to the xylose isomerase family. Homotetramer. Mg(2+) serves as cofactor.

The protein localises to the cytoplasm. It catalyses the reaction alpha-D-xylose = alpha-D-xylulofuranose. This is Xylose isomerase from Geobacillus kaustophilus (strain HTA426).